Reading from the N-terminus, the 429-residue chain is Ribosomal RNA small subunit methyltransferase B (429 aa).

S-adenosyl-L-methionine contacts are provided by residues 254–260 (CAAPGGK), aspartate 277, aspartate 303, and aspartate 322. Cysteine 375 functions as the Nucleophile in the catalytic mechanism.

Belongs to the class I-like SAM-binding methyltransferase superfamily. RsmB/NOP family.

It is found in the cytoplasm. The catalysed reaction is cytidine(967) in 16S rRNA + S-adenosyl-L-methionine = 5-methylcytidine(967) in 16S rRNA + S-adenosyl-L-homocysteine + H(+). Its function is as follows. Specifically methylates the cytosine at position 967 (m5C967) of 16S rRNA. In Escherichia coli (strain UTI89 / UPEC), this protein is Ribosomal RNA small subunit methyltransferase B.